A 121-amino-acid chain; its full sequence is Small ribosomal subunit protein uS13 (121 aa).

Positions 90–121 (RHRRGLPTRGQNTKNNARTRKGPTKTVAGKKK) are disordered. The segment covering 106–121 (ARTRKGPTKTVAGKKK) has biased composition (basic residues).

The protein belongs to the universal ribosomal protein uS13 family. In terms of assembly, part of the 30S ribosomal subunit. Forms a loose heterodimer with protein S19. Forms two bridges to the 50S subunit in the 70S ribosome.

Located at the top of the head of the 30S subunit, it contacts several helices of the 16S rRNA. In the 70S ribosome it contacts the 23S rRNA (bridge B1a) and protein L5 of the 50S subunit (bridge B1b), connecting the 2 subunits; these bridges are implicated in subunit movement. Contacts the tRNAs in the A and P-sites. This is Small ribosomal subunit protein uS13 from Enterococcus faecalis (strain ATCC 700802 / V583).